We begin with the raw amino-acid sequence, 342 residues long: MAAEDFLTIFLDDDESWNETLNMSGYDYSGNFSLEVSVCEMTTVVPYTWNVGILSLIFLINVLGNGLVTYIFCKHRSRAGAIDILLLGICLNSLCLSISLLAEVLMFLFPNIISTGLCRLEIFFYYLYVYLDIFSVVCVSLVRYLLVAYSTRSWPKKQSLGWVLTSAALLIALVLSGDACRHRSRVVDPVSKQAMCYENAGNMTADWRLHVRTVSVTAGFLLPLALLILFYALTWCVVRRTKLQARRKVRGVIVAVVLLFFVFCFPYHVLNLLDTLLRRRWIRDSCYTRGLINVGLAVTSLLQALYSAVVPLIYSCLGSLFRQRMYGLFQSLRQSFMSGATT.

The Extracellular portion of the chain corresponds to 1–51 (MAAEDFLTIFLDDDESWNETLNMSGYDYSGNFSLEVSVCEMTTVVPYTWNV). Residues Asn-18, Asn-22, and Asn-31 are each glycosylated (N-linked (GlcNAc...) asparagine; by host). A helical membrane pass occupies residues 52 to 72 (GILSLIFLINVLGNGLVTYIF). Residues 73–92 (CKHRSRAGAIDILLLGICLN) are Cytoplasmic-facing. A helical membrane pass occupies residues 93–113 (SLCLSISLLAEVLMFLFPNII). Topologically, residues 114-121 (STGLCRLE) are extracellular. The chain crosses the membrane as a helical span at residues 122-142 (IFFYYLYVYLDIFSVVCVSLV). The Cytoplasmic segment spans residues 143-159 (RYLLVAYSTRSWPKKQS). The helical transmembrane segment at 160–180 (LGWVLTSAALLIALVLSGDAC) threads the bilayer. Topologically, residues 181–217 (RHRSRVVDPVSKQAMCYENAGNMTADWRLHVRTVSVT) are extracellular. Residues 218–238 (AGFLLPLALLILFYALTWCVV) traverse the membrane as a helical segment. At 239 to 251 (RRTKLQARRKVRG) the chain is on the cytoplasmic side. The chain crosses the membrane as a helical span at residues 252-272 (VIVAVVLLFFVFCFPYHVLNL). Residues 273–293 (LDTLLRRRWIRDSCYTRGLIN) are Extracellular-facing. A helical transmembrane segment spans residues 294 to 314 (VGLAVTSLLQALYSAVVPLIY). Residues 315–342 (SCLGSLFRQRMYGLFQSLRQSFMSGATT) lie on the Cytoplasmic side of the membrane.

It belongs to the G-protein coupled receptor 1 family. As to quaternary structure, interacts with protein K7; this interaction promotes vGPCR proteasomal degradation. Interacts with host CADM1; this interaction is essential for chronic NF-kappa-B activation.

Its subcellular location is the host cell membrane. In terms of biological role, receptor that signals constitutively via several signaling pathways including PI3K/AKT as well as mitogen- and stress-activated/MAP kinases. Promotes host cell proliferation and survival, modulates cell migration, stimulates angiogenesis, and recruits inflammatory cells, both in expressing cells and in neighboring cells. Maintains chronic activation of NF-kappa-B via interaction with host CADM1. The polypeptide is viral G-protein coupled receptor (ORF74) (Human herpesvirus 8 type P (isolate GK18) (HHV-8)).